Consider the following 868-residue polypeptide: Cytosolic phospholipase A2 epsilon (868 aa).

The segment at 1-46 is disordered; sequence MSLQASEGCPGLGTNVFVPQSPQTDEEGSRSGRSFSEFEDTQDLDT. In terms of domain architecture, C2 spans 46 to 170; the sequence is TPGLPPFCPM…CFRKKTHVKF (125 aa). Ca(2+)-binding residues include Asp-84, Asp-90, Asp-140, Asp-142, and Asp-148. In terms of domain architecture, PLA2c spans 324-856; sequence PCPETLDVRL…TLLQALRLAV (533 aa). Ser-412 (nucleophile) is an active-site residue. Asp-700 functions as the Proton acceptor in the catalytic mechanism. Ser-800 is modified (phosphoserine). Positions 857 to 868 are required for localization at membrane structures; sequence EKKKRLKGQCPS.

Ca(2+) serves as cofactor.

The protein resides in the cytoplasm. Its subcellular location is the cytosol. The protein localises to the early endosome membrane. It localises to the lysosome membrane. It is found in the cell membrane. It carries out the reaction a 1,2-diacyl-sn-glycero-3-phosphoethanolamine + a 1,2-diacyl-sn-glycero-3-phosphocholine = an N-acyl-1,2-diacyl-sn-glycero-3-phosphoethanolamine + a 2-acyl-sn-glycero-3-phosphocholine + H(+). The enzyme catalyses 1-hexadecanoyl-2-octadecanoyl-sn-glycero-3-phosphocholine + 1,2-di-(9Z-octadecenoyl)-sn-glycero-3-phosphoethanolamine = 2-octadecanoyl-sn-glycero-3-phosphocholine + N-hexadecanoyl-1,2-di-(9Z-octadecenoyl)-sn-glycero-3-phosphoethanolamine + H(+). The catalysed reaction is 1-octadecanoyl-2-hexadecanoyl-sn-glycero-3-phosphocholine + 1,2-di-(9Z-octadecenoyl)-sn-glycero-3-phosphoethanolamine = N-octadecanoyl-1,2-di-(9Z-octadecenoyl)-sn-glycero-3-phosphoethanolamine + 2-hexadecanoyl-sn-glycero-3-phosphocholine + H(+). It catalyses the reaction 1,2-di-(9Z-octadecenoyl)-sn-glycero-3-phosphoethanolamine + 1,2-dihexadecanoyl-sn-glycero-3-phosphocholine = N-hexadecanoyl-1,2-di-(9Z-octadecenoyl)-sn-glycero-3-phosphoethanolamine + 2-hexadecanoyl-sn-glycero-3-phosphocholine + H(+). It carries out the reaction 1,2-di-(5Z,8Z,11Z,14Z-eicosatetraenoyl)-sn-glycero-3-phosphocholine + 1,2-di-(9Z-octadecenoyl)-sn-glycero-3-phosphoethanolamine = N-(5Z,8Z,11Z,14Z-eicosatetraenoyl)-1,2-di-(9Z-octadecenoyl)-sn-glycero-3-phosphoethanolamine + 2-(5Z,8Z,11Z,14Z)-eicosatetraenoyl-sn-glycero-3-phosphocholine + H(+). The enzyme catalyses 2 1,2-di-(9Z-octadecenoyl)-sn-glycero-3-phosphoethanolamine = N,1,2-tri-(9Z-octadecenoyl)-sn-glycero-3-phosphoethanolamine + 2-(9Z-octadecenoyl)-sn-glycero-3-phosphoethanolamine + H(+). The catalysed reaction is 1-(1Z-octadecenyl)-2-(9Z-octadecenoyl)-sn-glycero-3-phosphoethanolamine + 1,2-dihexadecanoyl-sn-glycero-3-phosphocholine = 1-O-(1Z-octadecenoyl)-2-(9Z-octadecenoyl)-sn-glycero-3-phospho-N-hexadecanoyl-ethanolamine + 2-hexadecanoyl-sn-glycero-3-phosphocholine + H(+). It catalyses the reaction a 1,2-diacyl-sn-glycero-3-phosphocholine + H2O = a 1-acyl-sn-glycero-3-phosphocholine + a fatty acid + H(+). It carries out the reaction 1-hexadecanoyl-2-(5Z,8Z,11Z,14Z-eicosatetraenoyl)-sn-glycero-3-phosphocholine + H2O = 1-hexadecanoyl-sn-glycero-3-phosphocholine + (5Z,8Z,11Z,14Z)-eicosatetraenoate + H(+). The enzyme catalyses 1-hexadecanoyl-sn-glycero-3-phosphocholine + H2O = sn-glycerol 3-phosphocholine + hexadecanoate + H(+). Stimulated by cytosolic Ca(2+). Stimulated by anionic phospholipids such as phosphatidylserines, phosphatidates and phosphatidylinositols. Its function is as follows. Calcium-dependent N-acyltransferase involved in the biosynthesis of N-acyl ethanolamines (NAEs) in the brain. Transfers the sn-1 fatty acyl chain of phosphatidylcholine (fatty acyl donor) to the amine group of phosphatidylethanolamine (fatty acyl acceptor) to generate N-acyl phosphatidylethanolamine (NAPE). Similarly can use plasmenylethanolamine as a fatty acyl acceptor to form N-acyl plasmenylethanolamine (N-Acyl-PlsEt). Both NAPE and N-Acyl-PlsEt can serve as precursors of bioactive NAEs like N-arachidonoyl phosphatidylethanolamine also called anandamide. Has weak phospholipase A2 and lysophospholipase activities. Regulates intracellular membrane trafficking that requires modulation of membrane curvature as it occurs by enrichment in lysophospholipids. Promotes tubule formation involved in clathrin-independent endocytotic trafficking and cargo recycling. This is Cytosolic phospholipase A2 epsilon from Homo sapiens (Human).